A 739-amino-acid chain; its full sequence is NAD(P)H-quinone oxidoreductase subunit 5, chloroplastic (739 aa).

The next 16 helical transmembrane spans lie at 9 to 29 (WIIP…LLLV), 39 to 59 (IWAF…ADLA), 89 to 109 (IDPL…MVLI), 125 to 145 (FAYM…SNLI), 147 to 167 (IYIF…FWFT), 185 to 205 (GDFG…SFEF), 224 to 244 (LFAA…SAQF), 258 to 278 (TPIS…FLVA), 280 to 300 (LLPL…IGII), 327 to 347 (LGYI…FHLI), 354 to 374 (ALLF…VGYS), 396 to 416 (TTFF…CFWS), 425 to 445 (WLYS…TAFY), 544 to 564 (LFPM…GIPF), 603 to 623 (IYSV…YGSV), and 719 to 739 (YIFL…FFSF).

The protein belongs to the complex I subunit 5 family. NDH is composed of at least 16 different subunits, 5 of which are encoded in the nucleus.

It is found in the plastid. Its subcellular location is the chloroplast thylakoid membrane. It carries out the reaction a plastoquinone + NADH + (n+1) H(+)(in) = a plastoquinol + NAD(+) + n H(+)(out). It catalyses the reaction a plastoquinone + NADPH + (n+1) H(+)(in) = a plastoquinol + NADP(+) + n H(+)(out). NDH shuttles electrons from NAD(P)H:plastoquinone, via FMN and iron-sulfur (Fe-S) centers, to quinones in the photosynthetic chain and possibly in a chloroplast respiratory chain. The immediate electron acceptor for the enzyme in this species is believed to be plastoquinone. Couples the redox reaction to proton translocation, and thus conserves the redox energy in a proton gradient. This is NAD(P)H-quinone oxidoreductase subunit 5, chloroplastic (ndhF) from Acorus calamus var. americanus (American sweet flag).